The sequence spans 253 residues: Rab GTPase-activating protein 1-like, isoform 10 (253 aa).

Positions S8 to S222 form a coiled coil. The segment at T233 to T253 is disordered.

The chain is Rab GTPase-activating protein 1-like, isoform 10 (RABGAP1L) from Homo sapiens (Human).